The following is a 146-amino-acid chain: Large ribosomal subunit protein uL15 (146 aa).

A disordered region spans residues 1 to 61; sequence MELNSLKPAA…GGQMPMHRRL (61 aa). Positions 30 to 39 are enriched in basic residues; the sequence is TATKGHKGQK.

The protein belongs to the universal ribosomal protein uL15 family. In terms of assembly, part of the 50S ribosomal subunit.

Binds to the 23S rRNA. In Geotalea uraniireducens (strain Rf4) (Geobacter uraniireducens), this protein is Large ribosomal subunit protein uL15.